We begin with the raw amino-acid sequence, 118 residues long: Large ribosomal subunit protein bL20 (118 aa).

It belongs to the bacterial ribosomal protein bL20 family.

Its function is as follows. Binds directly to 23S ribosomal RNA and is necessary for the in vitro assembly process of the 50S ribosomal subunit. It is not involved in the protein synthesizing functions of that subunit. The protein is Large ribosomal subunit protein bL20 of Staphylococcus carnosus (strain TM300).